The primary structure comprises 250 residues: 2,3-bisphosphoglycerate-dependent phosphoglycerate mutase (250 aa).

Substrate is bound by residues 8–15 (RHGQSAWN), 21–22 (TG), Arg60, 87–90 (ERHY), Lys98, 114–115 (RR), and 183–184 (GN). The Tele-phosphohistidine intermediate role is filled by His9. The active-site Proton donor/acceptor is Glu87.

This sequence belongs to the phosphoglycerate mutase family. BPG-dependent PGAM subfamily. In terms of assembly, homodimer.

The catalysed reaction is (2R)-2-phosphoglycerate = (2R)-3-phosphoglycerate. The protein operates within carbohydrate degradation; glycolysis; pyruvate from D-glyceraldehyde 3-phosphate: step 3/5. Catalyzes the interconversion of 2-phosphoglycerate and 3-phosphoglycerate. This chain is 2,3-bisphosphoglycerate-dependent phosphoglycerate mutase, found in Nitratidesulfovibrio vulgaris (strain DP4) (Desulfovibrio vulgaris).